The chain runs to 167 residues: Protein-export protein SecB (167 aa).

This sequence belongs to the SecB family. Homotetramer, a dimer of dimers. One homotetramer interacts with 1 SecA dimer.

Its subcellular location is the cytoplasm. One of the proteins required for the normal export of preproteins out of the cell cytoplasm. It is a molecular chaperone that binds to a subset of precursor proteins, maintaining them in a translocation-competent state. It also specifically binds to its receptor SecA. The protein is Protein-export protein SecB of Cellvibrio japonicus (strain Ueda107) (Pseudomonas fluorescens subsp. cellulosa).